The following is a 181-amino-acid chain: LEM domain-containing protein 1 (181 aa).

One can recognise an LEM domain in the interval 1 to 45 (MVDVKCLSDCKLQNQLEKLGFSPGPILPSTRKLYEKKLVQLLVSP). The helical; Signal-anchor for type II membrane protein transmembrane segment at 152 to 172 (FPVGLKLAVLGIFIIVVFVYL) threads the bilayer.

As to expression, testis-specific. Isoform 6 is detected in 17 of 18 colon cancer tissues examined.

The protein resides in the membrane. The polypeptide is LEM domain-containing protein 1 (LEMD1) (Homo sapiens (Human)).